The primary structure comprises 293 residues: MPWIQLKLNTTGANAEELSDALMEAGAVSITFQDTHNTPVFEPLPGETRLWGDTDVIGLFDAETDMKDVVAILEQHPLLGAGFAHKIEQLEDKDWEREWMDNFHPMRFGERLWICPSWRDIPDENAVNVMLDPGLAFGTGTHPTTSLCLQWLDGLDLNGKTVIDFGCGSGILAIAALKLGAAKAIGIDIDPQAIQASRDNAERNGVSDRLELYLPKDQPEAMKADVVVANILAGPLRELAPLISVLPVEGGLLGLSGVLASQAESVCDAYAELFTLDPVVEKEEWCRITGRKK.

S-adenosyl-L-methionine-binding residues include threonine 145, glycine 166, aspartate 188, and asparagine 230.

Belongs to the methyltransferase superfamily. PrmA family.

The protein localises to the cytoplasm. The enzyme catalyses L-lysyl-[protein] + 3 S-adenosyl-L-methionine = N(6),N(6),N(6)-trimethyl-L-lysyl-[protein] + 3 S-adenosyl-L-homocysteine + 3 H(+). Methylates ribosomal protein L11. The chain is Ribosomal protein L11 methyltransferase from Salmonella dublin (strain CT_02021853).